We begin with the raw amino-acid sequence, 312 residues long: Taste receptor type 2 member 62 (312 aa).

The Extracellular portion of the chain corresponds to 1–4; it reads MPSL. A helical membrane pass occupies residues 5–27; the sequence is PTLIFIAIFCLESLAAMLQNGFL. Topologically, residues 28–39 are cytoplasmic; it reads VTMLGREWVRCR. The chain crosses the membrane as a helical span at residues 40–62; the sequence is MLSTSDMIVACLAASRFCLHGVA. The Extracellular segment spans residues 63–81; that stretch reads MANNLLASLDFSRAVPYMN. A helical membrane pass occupies residues 82-104; it reads IFWDLFNALTLWFTALLAAFYCV. Over 105–127 the chain is Cytoplasmic; sequence KISSFSHPTFAWLKWRISRLVPK. The helical transmembrane segment at 128 to 150 threads the bilayer; sequence LIKGSLIICGLEVISSATGNILF. The Extracellular portion of the chain corresponds to 151–182; sequence GQRKVSLSSYRNETLVYRVQASFQLYFFLYDG. The N-linked (GlcNAc...) asparagine glycan is linked to asparagine 162. A helical transmembrane segment spans residues 183–205; the sequence is FVWSIPFLLFLVSTVLLIVSLCW. Residues 206-231 are Cytoplasmic-facing; the sequence is QLGQMRDLRPGPCDPSTQAYTMALKS. The chain crosses the membrane as a helical span at residues 232–254; that stretch reads LTFSLIFCTLYFLSLFASALKII. Over 255 to 258 the chain is Extracellular; it reads NFQN. Residues 259–281 form a helical membrane-spanning segment; that stretch reads HWHWAWEVLIYANICLHSTVLVL. At 282–312 the chain is on the cytoplasmic side; it reads RSPKLKKGLKTWPQLQCPCDAGSQGFGRCWP.

This sequence belongs to the G-protein coupled receptor T2R family.

It localises to the membrane. Functionally, receptor that may play a role in the perception of bitterness and is gustducin-linked. May play a role in sensing the chemical composition of the gastrointestinal content. The activity of this receptor may stimulate alpha gustducin, mediate PLC-beta-2 activation and lead to the gating of TRPM5. The chain is Taste receptor type 2 member 62 (TAS2R62) from Pan paniscus (Pygmy chimpanzee).